The sequence spans 447 residues: UMP-CMP kinase 2, mitochondrial (447 aa).

The transit peptide at 1 to 73 (MALISRPRAP…ELLGPPGRSY (73 aa)) directs the protein to the mitochondrion. 259–266 (GLDATGKT) provides a ligand contact to ATP. Residues 380 to 412 (EERVRRLQGRGQEKTKEEAELEANNVFRQKVEM) are a coiled coil.

This sequence belongs to the thymidylate kinase family. In terms of tissue distribution, strongly expressed in the brain.

The protein resides in the mitochondrion. It carries out the reaction CMP + ATP = CDP + ADP. The catalysed reaction is dCMP + ATP = dCDP + ADP. The enzyme catalyses a 2'-deoxyribonucleoside 5'-diphosphate + ATP = a 2'-deoxyribonucleoside 5'-triphosphate + ADP. It catalyses the reaction a ribonucleoside 5'-diphosphate + ATP = a ribonucleoside 5'-triphosphate + ADP. Mitochondrial nucleotide monophosphate kinase needed for salvage dNTP synthesis that mediates immunomodulatory and antiviral activities through IFN-dependent and IFN-independent pathways. Restricts the replication of multiple viruses including flaviviruses or coronaviruses. Together with viperin/RSAD2 and ddhCTP, suppresses the replication of several coronaviruses through inhibition of the viral RNA-dependent RNA polymerase activities. Concerning flaviviruses, restricts RNA translation when localized to the mitochondria independently of its kinase activity. Is able to phosphorylate dUMP, dCMP, CMP, UMP and monophosphates of the pyrimidine nucleoside analogs ddC, dFdC, araC, BVDU and FdUrd with ATP as phosphate donor. Efficacy is highest for dUMP followed by dCMP while CMP and UMP are poor substrates. Controls therefore mitochondrial DNA synthesis by supplying required deoxyribonucleotides. CMPK2-dependent mitochondrial DNA synthesis is necessary for the production of oxidized mitochondrial DNA fragments after exposure to NLRP3 activators. In turn, cytosolic oxidized mtDNA associates with the NLRP3 inflammasome complex and is required for its activation. This is UMP-CMP kinase 2, mitochondrial (Cmpk2) from Mus musculus (Mouse).